Reading from the N-terminus, the 222-residue chain is Probable transaldolase (222 aa).

Lysine 91 serves as the catalytic Schiff-base intermediate with substrate.

It belongs to the transaldolase family. Type 3B subfamily.

The protein resides in the cytoplasm. It catalyses the reaction D-sedoheptulose 7-phosphate + D-glyceraldehyde 3-phosphate = D-erythrose 4-phosphate + beta-D-fructose 6-phosphate. The protein operates within carbohydrate degradation; pentose phosphate pathway; D-glyceraldehyde 3-phosphate and beta-D-fructose 6-phosphate from D-ribose 5-phosphate and D-xylulose 5-phosphate (non-oxidative stage): step 2/3. Its function is as follows. Transaldolase is important for the balance of metabolites in the pentose-phosphate pathway. In Chlorobium limicola (strain DSM 245 / NBRC 103803 / 6330), this protein is Probable transaldolase.